The sequence spans 395 residues: Xylose isomerase (395 aa).

Catalysis depends on residues H54 and D57. Residues E181, E217, H220, D245, D255, D257, and D293 each contribute to the Mg(2+) site.

Belongs to the xylose isomerase family. In terms of assembly, homotetramer. Requires Mg(2+) as cofactor.

Its subcellular location is the cytoplasm. It carries out the reaction alpha-D-xylose = alpha-D-xylulofuranose. The protein is Xylose isomerase of Arthrobacter sp. (strain FB24).